Here is a 110-residue protein sequence, read N- to C-terminus: NADH-quinone oxidoreductase subunit K (110 aa).

3 consecutive transmembrane segments (helical) span residues Leu-7–Val-27, Ile-31–Ala-51, and Ile-73–Ile-93.

Belongs to the complex I subunit 4L family. As to quaternary structure, NDH-1 is composed of 14 different subunits. Subunits NuoA, H, J, K, L, M, N constitute the membrane sector of the complex.

Its subcellular location is the cell membrane. It carries out the reaction a quinone + NADH + 5 H(+)(in) = a quinol + NAD(+) + 4 H(+)(out). Functionally, NDH-1 shuttles electrons from NADH, via FMN and iron-sulfur (Fe-S) centers, to quinones in the respiratory chain. The immediate electron acceptor for the enzyme in this species is believed to be a menaquinone. Couples the redox reaction to proton translocation (for every two electrons transferred, four hydrogen ions are translocated across the cytoplasmic membrane), and thus conserves the redox energy in a proton gradient. The chain is NADH-quinone oxidoreductase subunit K from Desulfitobacterium hafniense (strain DSM 10664 / DCB-2).